A 940-amino-acid chain; its full sequence is MIMIRIWNNYKGKYRFFLSNCRSFSSIKRPQIPESEETSLSITQRRFDPDLAPIKTRVYVSLFHTLFRLYLSCERLYGAARTLSAMCTFGVVPDSRLWNSLIHQFNVNGLVHDQVSLIYSKMIACGVSPDVFALNVLIHSFCKVGRLSFAISLLRNRVISIDTVTYNTVISGLCEHGLADEAYQFLSEMVKMGILPDTVSYNTLIDGFCKVGNFVRAKALVDEISELNLITHTILLSSYYNLHAIEEAYRDMVMSGFDPDVVTFSSIINRLCKGGKVLEGGLLLREMEEMSVYPNHVTYTTLVDSLFKANIYRHALALYSQMVVRGIPVDLVVYTVLMDGLFKAGDLREAEKTFKMLLEDNQVPNVVTYTALVDGLCKAGDLSSAEFIITQMLEKSVIPNVVTYSSMINGYVKKGMLEEAVSLLRKMEDQNVVPNGFTYGTVIDGLFKAGKEEMAIELSKEMRLIGVEENNYILDALVNHLKRIGRIKEVKGLVKDMVSKGVTLDQINYTSLIDVFFKGGDEEAALAWAEEMQERGMPWDVVSYNVLISGMLKFGKVGADWAYKGMREKGIEPDIATFNIMMNSQRKQGDSEGILKLWDKMKSCGIKPSLMSCNIVVGMLCENGKMEEAIHILNQMMLMEIHPNLTTYRIFLDTSSKHKRADAIFKTHETLLSYGIKLSRQVYNTLIATLCKLGMTKKAAMVMGDMEARGFIPDTVTFNSLMHGYFVGSHVRKALSTYSVMMEAGISPNVATYNTIIRGLSDAGLIKEVDKWLSEMKSRGMRPDDFTYNALISGQAKIGNMKGSMTIYCEMIADGLVPKTSTYNVLISEFANVGKMLQARELLKEMGKRGVSPNTSTYCTMISGLCKLCTHPDVEWNKKAMYLAEAKGLLKEMVEEKGYIPCNQTIYWISAAFSKPGMKVDAERFLKECYKKKNARSSNS.

A mitochondrion-targeting transit peptide spans 1-24 (MIMIRIWNNYKGKYRFFLSNCRSF). PPR repeat units follow at residues 59-93 (YVSL…GVVP), 94-129 (DSRL…GVSP), 130-161 (DVFA…VISI), 162-196 (DTVT…GILP), 197-231 (DTVS…NLIT), 241-259 (NLHA…GFDP), 260-294 (DVVT…SVYP), 295-329 (NHVT…GIPV), 330-364 (DLVV…NQVP), 365-399 (NVVT…SVIP), 400-434 (NVVT…NVVP), 435-469 (NGFT…GVEE), 470-504 (NNYI…GVTL), 505-539 (DQIN…GMPW), 540-573 (DVVS…GIEP), 574-608 (DIAT…GIKP), 609-643 (SLMS…EIHP), 644-678 (NLTT…GIKL), 679-713 (SRQV…GFIP), 714-748 (DTVT…GISP), 749-783 (NVAT…GMRP), 784-818 (DDFT…GLVP), 819-853 (KTST…GVSP), and 854-891 (NTST…GLLK).

It belongs to the PPR family. P subfamily.

It localises to the mitochondrion. In Arabidopsis thaliana (Mouse-ear cress), this protein is Pentatricopeptide repeat-containing protein At5g14770, mitochondrial.